A 155-amino-acid chain; its full sequence is Egg cell-secreted protein 1.5 (155 aa).

Residues 1 to 32 (MATKSTSKPLLLSFLMMSYLISTFHVITVAEG) form the signal peptide.

It belongs to the plant egg cell-secreted peptide family. Restricted to female reproductive tissues, specifically accumulating in storage vesicles of the unfertilized egg cell.

Its subcellular location is the cytoplasmic vesicle. It is found in the secreted. Its function is as follows. Involved in the regulation of gamete interactions during the double fertilization and to prevent multiple-pollen tube attraction; mediates the redistribution of the gamete fusogen HAP2/GCS1 to the cell surface after secretion upon sperm arrival. The protein is Egg cell-secreted protein 1.5 (EC1.5) of Arabidopsis thaliana (Mouse-ear cress).